The following is a 318-amino-acid chain: Cis-3-alkyl-4-alkyloxetan-2-one decarboxylase (318 aa).

Residues P30 to D275 enclose the AB hydrolase-1 domain.

Belongs to the AB hydrolase superfamily.

It carries out the reaction a cis-3-alkyl-4-alkyloxetan-2-one = a cis-alkene + CO2. Functionally, involved in olefin biosynthesis. Catalyzes the elimination of carbon dioxide from beta-lactones to form the final olefin product. The S.oneidensis oleABCD genes produce 3,6,9,12,15,19,22,25,28-hentriacontanonaene, which may aid the cells in adapting to a sudden drop in temperature. In Shewanella oneidensis (strain ATCC 700550 / JCM 31522 / CIP 106686 / LMG 19005 / NCIMB 14063 / MR-1), this protein is Cis-3-alkyl-4-alkyloxetan-2-one decarboxylase.